An 87-amino-acid polypeptide reads, in one-letter code: Exodeoxyribonuclease 7 small subunit (87 aa).

It belongs to the XseB family. Heterooligomer composed of large and small subunits.

The protein resides in the cytoplasm. It carries out the reaction Exonucleolytic cleavage in either 5'- to 3'- or 3'- to 5'-direction to yield nucleoside 5'-phosphates.. In terms of biological role, bidirectionally degrades single-stranded DNA into large acid-insoluble oligonucleotides, which are then degraded further into small acid-soluble oligonucleotides. The polypeptide is Exodeoxyribonuclease 7 small subunit (Xanthomonas campestris pv. campestris (strain 8004)).